The chain runs to 94 residues: Small ribosomal subunit protein bS6 (94 aa).

Belongs to the bacterial ribosomal protein bS6 family.

Its function is as follows. Binds together with bS18 to 16S ribosomal RNA. In Clostridium botulinum (strain Hall / ATCC 3502 / NCTC 13319 / Type A), this protein is Small ribosomal subunit protein bS6.